We begin with the raw amino-acid sequence, 173 residues long: Large ribosomal subunit protein uL16 (173 aa).

It belongs to the universal ribosomal protein uL16 family.

In Methanosarcina mazei (strain ATCC BAA-159 / DSM 3647 / Goe1 / Go1 / JCM 11833 / OCM 88) (Methanosarcina frisia), this protein is Large ribosomal subunit protein uL16.